Here is a 252-residue protein sequence, read N- to C-terminus: Trans-aconitate 2-methyltransferase (252 aa).

Belongs to the methyltransferase superfamily. Tam family.

The protein resides in the cytoplasm. The enzyme catalyses trans-aconitate + S-adenosyl-L-methionine = (E)-3-(methoxycarbonyl)pent-2-enedioate + S-adenosyl-L-homocysteine. Its function is as follows. Catalyzes the S-adenosylmethionine monomethyl esterification of trans-aconitate. This is Trans-aconitate 2-methyltransferase from Enterobacter sp. (strain 638).